Consider the following 1075-residue polypeptide: DNA-directed RNA polymerase subunit beta (1075 aa).

This sequence belongs to the RNA polymerase beta chain family. In plastids the minimal PEP RNA polymerase catalytic core is composed of four subunits: alpha, beta, beta', and beta''. When a (nuclear-encoded) sigma factor is associated with the core the holoenzyme is formed, which can initiate transcription.

Its subcellular location is the plastid. It localises to the chloroplast. It carries out the reaction RNA(n) + a ribonucleoside 5'-triphosphate = RNA(n+1) + diphosphate. Its function is as follows. DNA-dependent RNA polymerase catalyzes the transcription of DNA into RNA using the four ribonucleoside triphosphates as substrates. The protein is DNA-directed RNA polymerase subunit beta of Pinus thunbergii (Japanese black pine).